The primary structure comprises 138 residues: U1 small nuclear ribonucleoprotein C (138 aa).

The Matrin-type zinc finger occupies 4–36; the sequence is FYCDYCDTYLTHDSPSVRKTHCSGRKHKENVRD. Tyr8 carries the post-translational modification Phosphotyrosine. Ser17 is modified (phosphoserine). Position 52 is an N6-acetyllysine (Lys52). The disordered stretch occupies residues 62–99; the sequence is IPPNLFSAPPLGGPMIPPPHPSMMGPPPPGMMPVGPPP. Pro residues predominate over residues 72-99; the sequence is LGGPMIPPPHPSMMGPPPPGMMPVGPPP.

The protein belongs to the U1 small nuclear ribonucleoprotein C family. Component of the U1 snRNP. The U1 snRNP is composed of the U1 snRNA and the 7 core Sm proteins SNRPB, SNRPD1, SNRPD2, SNRPD3, SNRPE, SNRPF and SNRPG that assemble in a heptameric protein ring on the Sm site of the small nuclear RNA to form the core snRNP, and at least 3 U1 snRNP-specific proteins SNRNP70/U1-70K, SNRPA/U1-A and SNRPC/U1-C. SNRPC/U1-C interacts with U1 snRNA and the 5' splice-site region of the pre-mRNA. Interacts (via N-terminus) with TIA1 (via C-terminus); thereby promoting spliceosomal U1 snRNP recruitment to 5' splice sites.

Its subcellular location is the nucleus. Component of the spliceosomal U1 snRNP, which is essential for recognition of the pre-mRNA 5' splice-site and the subsequent assembly of the spliceosome. SNRPC/U1-C is directly involved in initial 5' splice-site recognition for both constitutive and regulated alternative splicing. The interaction with the 5' splice-site seems to precede base-pairing between the pre-mRNA and the U1 snRNA. Stimulates commitment or early (E) complex formation by stabilizing the base pairing of the 5' end of the U1 snRNA and the 5' splice-site region. The chain is U1 small nuclear ribonucleoprotein C from Monodelphis domestica (Gray short-tailed opossum).